Consider the following 58-residue polypeptide: Potassium channel toxin alpha-KTx 1.6 (58 aa).

The N-terminal stretch at 1 to 21 is a signal peptide; sequence MKISFLLLLAIVICSIGWTEA. At Q22 the chain carries Pyrrolidone carboxylic acid. 3 cysteine pairs are disulfide-bonded: C28-C49, C34-C54, and C38-C56.

This sequence belongs to the short scorpion toxin superfamily. Potassium channel inhibitor family. Alpha-KTx 01 subfamily. Expressed by the venom gland.

It localises to the secreted. Potent blocker of both large-conductance calcium-activated potassium channels (KCa1.1/KCNMA1) and voltage-gated potassium channels (Kv1.3/KCNA3 and ERG1/Kv11.1/KCNH2). The chain is Potassium channel toxin alpha-KTx 1.6 from Olivierus martensii (Manchurian scorpion).